The chain runs to 314 residues: Lipoyl synthase (314 aa).

Positions 40, 45, 51, 67, 71, 74, and 280 each coordinate [4Fe-4S] cluster. In terms of domain architecture, Radical SAM core spans 53 to 269 (SERKTATFMI…KNIALEKGFS (217 aa)).

It belongs to the radical SAM superfamily. Lipoyl synthase family. It depends on [4Fe-4S] cluster as a cofactor.

The protein localises to the cytoplasm. The enzyme catalyses [[Fe-S] cluster scaffold protein carrying a second [4Fe-4S](2+) cluster] + N(6)-octanoyl-L-lysyl-[protein] + 2 oxidized [2Fe-2S]-[ferredoxin] + 2 S-adenosyl-L-methionine + 4 H(+) = [[Fe-S] cluster scaffold protein] + N(6)-[(R)-dihydrolipoyl]-L-lysyl-[protein] + 4 Fe(3+) + 2 hydrogen sulfide + 2 5'-deoxyadenosine + 2 L-methionine + 2 reduced [2Fe-2S]-[ferredoxin]. The protein operates within protein modification; protein lipoylation via endogenous pathway; protein N(6)-(lipoyl)lysine from octanoyl-[acyl-carrier-protein]. Catalyzes the radical-mediated insertion of two sulfur atoms into the C-6 and C-8 positions of the octanoyl moiety bound to the lipoyl domains of lipoate-dependent enzymes, thereby converting the octanoylated domains into lipoylated derivatives. The protein is Lipoyl synthase of Oceanobacillus iheyensis (strain DSM 14371 / CIP 107618 / JCM 11309 / KCTC 3954 / HTE831).